A 1029-amino-acid chain; its full sequence is Tyrosine-protein kinase-like otk (1029 aa).

Residues Met1–Ala18 form the signal peptide. Residues Ser19–Ala577 are Extracellular-facing. Ig-like C2-type domains lie at Ser21–Ser110, Leu109–Ser195, Pro247–Ser361, Pro364–Asn459, and Pro464–Val554. The N-linked (GlcNAc...) asparagine glycan is linked to Asn35. 4 cysteine pairs are disulfide-bonded: Cys42/Cys91, Cys133/Cys184, Cys272/Cys350, and Cys395/Cys443. Asn332, Asn413, Asn425, Asn440, Asn453, Asn508, and Asn520 each carry an N-linked (GlcNAc...) asparagine glycan. Cys486 and Cys538 are disulfide-bonded. A helical transmembrane segment spans residues Val578–Trp598. At Cys599–Lys1029 the chain is on the cytoplasmic side. Disordered regions lie at residues Leu613–Ala675 and Ser714–Met756. Residues Lys651 to Arg669 show a composition bias toward polar residues. Phosphoserine is present on Ser674. The Protein kinase; inactive domain occupies Leu688–Met1024. Residues Ser716 to Ser727 are compositionally biased toward basic and acidic residues.

This sequence belongs to the protein kinase superfamily. Tyr protein kinase family. Insulin receptor subfamily. In terms of assembly, interacts with plexA; component of a receptor complex that mediates the repulsive signaling in response to Semaphorin ligands.

Its subcellular location is the cell membrane. Functionally, acts as a calcium-dependent, homophilic cell adhesion molecule that regulates neural recognition during the development of the nervous system. Component of the repulsive Plexin signaling response to regulate motor axon guidance at the embryonic stage. Also component of a receptor complex that is required in the adult visual system to innervate the lamina layer; specific targeting of R1-R6 axons. The polypeptide is Tyrosine-protein kinase-like otk (Drosophila simulans (Fruit fly)).